A 776-amino-acid polypeptide reads, in one-letter code: Venom dipeptidyl peptidase 4 (776 aa).

The first 25 residues, 1 to 25 (MVPLRSFVLLNSLFLVLLAARTVVT), serve as a signal peptide directing secretion. N44, N66, and N329 each carry an N-linked (GlcNAc...) asparagine glycan. 2 cysteine pairs are disulfide-bonded: C449-C452 and C462-C480. N-linked (GlcNAc...) asparagine glycosylation is found at N504 and N577. The active-site Charge relay system is the S638. C658 and C769 are joined by a disulfide. N-linked (GlcNAc...) asparagine glycans are attached at residues N688 and N693. Active-site charge relay system residues include D717 and H749.

Belongs to the peptidase S9B family. DPPIV subfamily. Expressed by the venom gland.

The protein resides in the secreted. The enzyme catalyses Release of an N-terminal dipeptide, Xaa-Yaa-|-Zaa-, from a polypeptide, preferentially when Yaa is Pro, provided Zaa is neither Pro nor hydroxyproline.. With respect to regulation, inhibited by diprotin A. Functionally, venom dipeptidyl-peptidase which removes N-terminal dipeptides sequentially from polypeptides having unsubstituted N-termini provided that the penultimate residue is proline. May process venom proteins into their active forms and/or modulate the chemotactic activity of immune cells after the insect sting. The polypeptide is Venom dipeptidyl peptidase 4 (Vespula vulgaris (Yellow jacket)).